The primary structure comprises 40 residues: Acyl-CoA-binding protein 2 (40 aa).

Positions 1–15 are enriched in basic and acidic residues; the sequence is ALKEEFEEHAEKAKT. Residues 1 to 25 are disordered; sequence ALKEEFEEHAEKAKTLPENTSSENK. Residues 2-40 enclose the ACB domain; sequence LKEEFEEHAEKAKTLPENTSSENKLTLYGLYKQATVGNV.

It belongs to the ACBP family.

It is found in the cytoplasm. Binds medium- and long-chain acyl-CoA esters with very high affinity and may function as an intracellular carrier of acyl-CoA esters. The protein is Acyl-CoA-binding protein 2 of Digitalis lanata (Grecian foxglove).